The following is a 96-amino-acid chain: Aspartyl/glutamyl-tRNA(Asn/Gln) amidotransferase subunit C (96 aa).

Belongs to the GatC family. As to quaternary structure, heterotrimer of A, B and C subunits.

It carries out the reaction L-glutamyl-tRNA(Gln) + L-glutamine + ATP + H2O = L-glutaminyl-tRNA(Gln) + L-glutamate + ADP + phosphate + H(+). It catalyses the reaction L-aspartyl-tRNA(Asn) + L-glutamine + ATP + H2O = L-asparaginyl-tRNA(Asn) + L-glutamate + ADP + phosphate + 2 H(+). In terms of biological role, allows the formation of correctly charged Asn-tRNA(Asn) or Gln-tRNA(Gln) through the transamidation of misacylated Asp-tRNA(Asn) or Glu-tRNA(Gln) in organisms which lack either or both of asparaginyl-tRNA or glutaminyl-tRNA synthetases. The reaction takes place in the presence of glutamine and ATP through an activated phospho-Asp-tRNA(Asn) or phospho-Glu-tRNA(Gln). The protein is Aspartyl/glutamyl-tRNA(Asn/Gln) amidotransferase subunit C of Chloroflexus aggregans (strain MD-66 / DSM 9485).